Reading from the N-terminus, the 155-residue chain is Phosphoprotein pp24 (155 aa).

The interval 1-50 is disordered; sequence MEFEAEHEGLTASWVAPAPQGGKGAEGRAGVADEAGHGKTEAECAEDGEK. Basic and acidic residues predominate over residues 34–50; that stretch reads EAGHGKTEAECAEDGEK. A coiled-coil region spans residues 76 to 107; the sequence is RKRIEAKYMDLLVEAERENKNLRKKYNIILDV.

The protein is Phosphoprotein pp24 (MDV008) of Gallus gallus (Chicken).